Consider the following 188-residue polypeptide: Ribosome-recycling factor (188 aa).

This sequence belongs to the RRF family.

The protein localises to the cytoplasm. In terms of biological role, responsible for the release of ribosomes from messenger RNA at the termination of protein biosynthesis. May increase the efficiency of translation by recycling ribosomes from one round of translation to another. This chain is Ribosome-recycling factor, found in Anaeromyxobacter dehalogenans (strain 2CP-C).